A 302-amino-acid chain; its full sequence is Nucleotide-binding protein Bmul_0520/BMULJ_02739 (302 aa).

Residue 8–15 (GISGSGKS) coordinates ATP. 57–60 (DARS) is a GTP binding site.

This sequence belongs to the RapZ-like family.

In terms of biological role, displays ATPase and GTPase activities. This chain is Nucleotide-binding protein Bmul_0520/BMULJ_02739, found in Burkholderia multivorans (strain ATCC 17616 / 249).